The sequence spans 78 residues: Small ribosomal subunit protein bS18 (78 aa).

The protein belongs to the bacterial ribosomal protein bS18 family. Part of the 30S ribosomal subunit. Forms a tight heterodimer with protein bS6.

Functionally, binds as a heterodimer with protein bS6 to the central domain of the 16S rRNA, where it helps stabilize the platform of the 30S subunit. This Acidothermus cellulolyticus (strain ATCC 43068 / DSM 8971 / 11B) protein is Small ribosomal subunit protein bS18.